Here is a 553-residue protein sequence, read N- to C-terminus: Glucose-6-phosphate isomerase (553 aa).

The active-site Proton donor is the Glu357. Catalysis depends on residues His388 and Lys514. A disordered region spans residues 527–553 (ADSPAAQSDSSTDALVRRYRTERGRTA). Positions 541–553 (LVRRYRTERGRTA) are enriched in basic and acidic residues.

The protein belongs to the GPI family.

The protein localises to the cytoplasm. The catalysed reaction is alpha-D-glucose 6-phosphate = beta-D-fructose 6-phosphate. The protein operates within carbohydrate biosynthesis; gluconeogenesis. It functions in the pathway carbohydrate degradation; glycolysis; D-glyceraldehyde 3-phosphate and glycerone phosphate from D-glucose: step 2/4. Its function is as follows. Catalyzes the reversible isomerization of glucose-6-phosphate to fructose-6-phosphate. This is Glucose-6-phosphate isomerase from Mycolicibacterium vanbaalenii (strain DSM 7251 / JCM 13017 / BCRC 16820 / KCTC 9966 / NRRL B-24157 / PYR-1) (Mycobacterium vanbaalenii).